A 252-amino-acid chain; its full sequence is Type II secretion system protein N (252 aa).

The Cytoplasmic segment spans residues 1–4 (MKQK). The helical transmembrane segment at 5–25 (VLIAALFLVAYLGFLLVKLPA) threads the bilayer. At 26–252 (TLVVRHLPLP…RFPLRYQGRI (227 aa)) the chain is on the periplasmic side.

This sequence belongs to the GSP N family.

It localises to the cell inner membrane. Involved in a type II secretion system (T2SS, formerly general secretion pathway, GSP) for the export of proteins. The sequence is that of Type II secretion system protein N (exeN) from Aeromonas hydrophila.